The primary structure comprises 197 residues: Ribonuclease HII (197 aa).

The 187-residue stretch at 11–197 folds into the RNase H type-2 domain; sequence HLIAGVDEVG…FAPVKKILGL (187 aa). Positions 17, 18, and 109 each coordinate a divalent metal cation.

It belongs to the RNase HII family. It depends on Mn(2+) as a cofactor. Mg(2+) serves as cofactor.

The protein localises to the cytoplasm. It carries out the reaction Endonucleolytic cleavage to 5'-phosphomonoester.. Endonuclease that specifically degrades the RNA of RNA-DNA hybrids. In Actinobacillus pleuropneumoniae serotype 7 (strain AP76), this protein is Ribonuclease HII.